The primary structure comprises 407 residues: Probable tRNA sulfurtransferase (407 aa).

Residues Asn-61–Val-165 form the THUMP domain. Residues Met-183–Leu-184, His-208–Phe-209, Arg-265, Gly-287, and Gln-296 contribute to the ATP site.

The protein belongs to the ThiI family.

It localises to the cytoplasm. The catalysed reaction is [ThiI sulfur-carrier protein]-S-sulfanyl-L-cysteine + a uridine in tRNA + 2 reduced [2Fe-2S]-[ferredoxin] + ATP + H(+) = [ThiI sulfur-carrier protein]-L-cysteine + a 4-thiouridine in tRNA + 2 oxidized [2Fe-2S]-[ferredoxin] + AMP + diphosphate. It catalyses the reaction [ThiS sulfur-carrier protein]-C-terminal Gly-Gly-AMP + S-sulfanyl-L-cysteinyl-[cysteine desulfurase] + AH2 = [ThiS sulfur-carrier protein]-C-terminal-Gly-aminoethanethioate + L-cysteinyl-[cysteine desulfurase] + A + AMP + 2 H(+). It functions in the pathway cofactor biosynthesis; thiamine diphosphate biosynthesis. Functionally, catalyzes the ATP-dependent transfer of a sulfur to tRNA to produce 4-thiouridine in position 8 of tRNAs, which functions as a near-UV photosensor. Also catalyzes the transfer of sulfur to the sulfur carrier protein ThiS, forming ThiS-thiocarboxylate. This is a step in the synthesis of thiazole, in the thiamine biosynthesis pathway. The sulfur is donated as persulfide by IscS. The protein is Probable tRNA sulfurtransferase of Staphylococcus aureus (strain Mu3 / ATCC 700698).